A 317-amino-acid polypeptide reads, in one-letter code: GTPase Era (317 aa).

Residues R23–E190 form the Era-type G domain. A G1 region spans residues G31 to S38. A GTP-binding site is contributed by G31–S38. Residues Q57–A61 are G2. Residues D78–G81 form a G3 region. GTP contacts are provided by residues D78–I82 and N140–D143. The G4 stretch occupies residues N140–D143. A G5 region spans residues I169 to A171. One can recognise a KH type-2 domain in the interval L221 to E298.

It belongs to the TRAFAC class TrmE-Era-EngA-EngB-Septin-like GTPase superfamily. Era GTPase family. As to quaternary structure, monomer.

It is found in the cytoplasm. It localises to the cell inner membrane. In terms of biological role, an essential GTPase that binds both GDP and GTP, with rapid nucleotide exchange. Plays a role in 16S rRNA processing and 30S ribosomal subunit biogenesis and possibly also in cell cycle regulation and energy metabolism. The chain is GTPase Era from Agrobacterium fabrum (strain C58 / ATCC 33970) (Agrobacterium tumefaciens (strain C58)).